Here is a 296-residue protein sequence, read N- to C-terminus: uncharacterized protein (296 aa).

Positions 129 to 170 form a coiled coil; that stretch reads VKELKDLIRTVADEHMKMKREHEAAMKELTLLINNQKQQQQQ. The disordered stretch occupies residues 165-187; it reads KQQQQQPVPMPRNSTATRPKNLA.

This is an uncharacterized protein from Ostreid herpesvirus 1 (isolate France) (OsHV-1).